Reading from the N-terminus, the 573-residue chain is Proline--tRNA ligase (573 aa).

It belongs to the class-II aminoacyl-tRNA synthetase family. ProS type 1 subfamily. In terms of assembly, homodimer.

It localises to the cytoplasm. It catalyses the reaction tRNA(Pro) + L-proline + ATP = L-prolyl-tRNA(Pro) + AMP + diphosphate. Functionally, catalyzes the attachment of proline to tRNA(Pro) in a two-step reaction: proline is first activated by ATP to form Pro-AMP and then transferred to the acceptor end of tRNA(Pro). As ProRS can inadvertently accommodate and process non-cognate amino acids such as alanine and cysteine, to avoid such errors it has two additional distinct editing activities against alanine. One activity is designated as 'pretransfer' editing and involves the tRNA(Pro)-independent hydrolysis of activated Ala-AMP. The other activity is designated 'posttransfer' editing and involves deacylation of mischarged Ala-tRNA(Pro). The misacylated Cys-tRNA(Pro) is not edited by ProRS. This is Proline--tRNA ligase from Cupriavidus necator (strain ATCC 17699 / DSM 428 / KCTC 22496 / NCIMB 10442 / H16 / Stanier 337) (Ralstonia eutropha).